A 123-amino-acid polypeptide reads, in one-letter code: Non-specific lipid-transfer protein 3 (123 aa).

A signal peptide spans 1 to 25; sequence MASSGQLLKLVCLVAVMCCMAVGGP. 4 disulfides stabilise this stretch: Cys33–Cys80, Cys43–Cys57, Cys58–Cys105, and Cys78–Cys119.

It belongs to the plant LTP family.

Functionally, plant non-specific lipid-transfer proteins transfer phospholipids as well as galactolipids across membranes. May play a role in wax or cutin deposition in the cell walls of expanding epidermal cells and certain secretory tissues. The chain is Non-specific lipid-transfer protein 3 from Prunus dulcis (Almond).